The primary structure comprises 394 residues: MDSTALKVALGCIAIRLAVNSLFPSLQQQLDQSVEFSTPVTSFRSLQEGIYLLRNNIQVYNHGVVHHPPILIFFLSLFNSDRLISLIYALIDGLIAYQLTEVTKAFKNLKLKVWLPGLLYAVNPLTLLSCISRSSIIFTNFAISSSLYCILAEGNVLLSSVMISISGYLSVYPILLLIPLLGMLKSWRQRILSAIVSILSLLILLLFSYSILGSQSWSFLTQVYGSIITFEKVFPNLGLWWYFFIEMFDTFIPFFKAVFNIFIAVFITPFTLRYHKQPFYAFILCIGWIVLTKPYPSLGDAGFFFSFLPFFTPLFGYLRYPIISALLFLHAIVLAPIFYHLWVVLGSGNSNFFYAISLVYALAIASILVDLNWAMLRIEYDNGIPNFKLKVTQI.

The Cytoplasmic segment spans residues 1–135; the sequence is MDSTALKVAL…TLLSCISRSS (135 aa). The helical transmembrane segment at 136–156 threads the bilayer; that stretch reads IIFTNFAISSSLYCILAEGNV. Over 157–160 the chain is Lumenal; that stretch reads LLSS. A helical membrane pass occupies residues 161-181; the sequence is VMISISGYLSVYPILLLIPLL. Residues 182 to 190 lie on the Cytoplasmic side of the membrane; the sequence is GMLKSWRQR. Residues 191 to 211 traverse the membrane as a helical segment; sequence ILSAIVSILSLLILLLFSYSI. The Lumenal portion of the chain corresponds to 212 to 224; the sequence is LGSQSWSFLTQVY. A helical transmembrane segment spans residues 225–245; sequence GSIITFEKVFPNLGLWWYFFI. Residues 235 to 255 are may be involved in recognition of long-chain fatty acids in GPI; the sequence is PNLGLWWYFFIEMFDTFIPFF. At 246–250 the chain is on the cytoplasmic side; it reads EMFDT. A helical transmembrane segment spans residues 251-271; that stretch reads FIPFFKAVFNIFIAVFITPFT. Residues 272–297 lie on the Lumenal side of the membrane; it reads LRYHKQPFYAFILCIGWIVLTKPYPS. The helical transmembrane segment at 298-318 threads the bilayer; sequence LGDAGFFFSFLPFFTPLFGYL. Over 319-324 the chain is Cytoplasmic; sequence RYPIIS. Residues 325-345 traverse the membrane as a helical segment; it reads ALLFLHAIVLAPIFYHLWVVL. The Lumenal segment spans residues 346–351; the sequence is GSGNSN. A helical membrane pass occupies residues 352–372; sequence FFYAISLVYALAIASILVDLN. The Cytoplasmic portion of the chain corresponds to 373–394; sequence WAMLRIEYDNGIPNFKLKVTQI.

It belongs to the PIGU family. In terms of assembly, forms a complex with GPI16, GPI17, GPI8 and GAA1.

The protein resides in the endoplasmic reticulum membrane. It functions in the pathway glycolipid biosynthesis; glycosylphosphatidylinositol-anchor biosynthesis. In terms of biological role, component of the GPI transamidase complex. May be involved in the recognition of either the GPI attachment signal or the lipid portion of GPI. The polypeptide is GPI transamidase component GAB1 (GAB1) (Saccharomyces cerevisiae (strain ATCC 204508 / S288c) (Baker's yeast)).